Here is a 149-residue protein sequence, read N- to C-terminus: MEFQGQHDNPANRVDEYGNPFPLAGAWGERTRSRHRRAVPGPQGRAQDRWILHRSGSSSSSSSSEDDGMGGRRKKGMKEKIKEKLPGGHKDNQQHMATGTGTGGAYGPGTGTGGAYGQQGHTGMAGAGTGTGEKKGIMDKIKEKLPGQH.

The interval 1–149 is disordered; the sequence is MEFQGQHDNP…KIKEKLPGQH (149 aa). Residues 78–93 show a composition bias toward basic and acidic residues; the sequence is KEKIKEKLPGGHKDNQ. The segment covering 100–117 has biased composition (gly residues); the sequence is TGTGGAYGPGTGTGGAYG. Residues 132 to 149 are compositionally biased toward basic and acidic residues; it reads GEKKGIMDKIKEKLPGQH.

This sequence belongs to the plant dehydrin family.

This is Dehydrin Rab15 (RAB15) from Triticum aestivum (Wheat).